The sequence spans 492 residues: MKKTVVIGAGFGGLALAIRLQAAGIPTVLLEQRDKPGGRAYVWHDQGFTFDAGPTVITDPTALEALFTLAGRRMEDYVRLLPVKPFYRLCWESGKTLDYANDSAELEAQITQFNPRDVEGYRRFLAYSQAVFQEGYLRLGSVPFLSFRDMLRAGPQLLKLQAWQSVYQSVSRFIEDEHLRQAFSFHSLLVGGNPFTTSSIYTLIHALEREWGVWFPEGGTGALVNGMVKLFTDLGGEIELNARVEELVVADNRVSQVRLADGRIFDTDAVASNADVVNTYKKLLGHHPVGQKRAAALERKSMSNSLFVLYFGLNQPHSQLAHHTICFGPRYRELIDEIFTGSALADDFSLYLHSPCVTDPSLAPPGCASFYVLAPVPHLGNAPLDWAQEGPKLRDRIFDYLEERYMPGLRSQLVTQRIFTPADFHDTLDAHLGSAFSIEPLLTQSAWFRPHNRDSDIANLYLVGAGTHPGAGIPGVVASAKATASLMIEDLQ.

5–38 (VVIGAGFGGLALAIRLQAAGIPTVLLEQRDKPGG) is a binding site for FAD.

This sequence belongs to the carotenoid/retinoid oxidoreductase family. FAD serves as cofactor.

It carries out the reaction 15-cis-phytoene + 4 A = all-trans-lycopene + 4 AH2. Its pathway is carotenoid biosynthesis; lycopene biosynthesis. Functionally, this enzyme converts phytoene into lycopene via the intermediaries of phytofluene, zeta-carotene and neurosporene by the introduction of four double bonds. This Pseudescherichia vulneris (Escherichia vulneris) protein is Phytoene desaturase (lycopene-forming) (crtI).